The primary structure comprises 205 residues: Calcium-binding allergen Bet v 3 (205 aa).

The tract at residues 1–26 (MPCSTEAMEKAGHGHASTPRKRSLSN) is disordered. 4 consecutive EF-hand domains span residues 36-71 (LNTL…LGLE), 72-107 (TDLS…LNDS), 130-165 (QEEA…LGFS), and 168-203 (SEID…VLVR). The Ca(2+) site is built by D49, N51, D53, and E60. The Ca(2+) site is built by D143, D145, D147, Y149, E154, D181, N183, D185, R187, and E192.

Functionally, could be involved in calcium metabolism in pollen. Binds 3 calcium ions. This Betula pendula (European white birch) protein is Calcium-binding allergen Bet v 3 (BETVIII).